We begin with the raw amino-acid sequence, 379 residues long: uncharacterized protein (379 aa).

The protein belongs to the glycosyltransferase 28 family.

This is an uncharacterized protein from Methanosarcina acetivorans (strain ATCC 35395 / DSM 2834 / JCM 12185 / C2A).